Here is a 1583-residue protein sequence, read N- to C-terminus: Dynamin-binding protein (1583 aa).

At Met-1 the chain carries N-acetylmethionine. 4 consecutive SH3 domains span residues 2–61 (EAGS…IVTI), 66–126 (EGER…ELCL), 145–204 (YSMG…LLGP), and 243–302 (QPGT…LFSK). Disordered regions lie at residues 217-244 (HNDC…EEQP), 306-329 (EETM…DCRE), and 366-464 (ECEV…RGMY). The segment covering 224-243 (GEEETPTGEEERGPEEDEEQ) has biased composition (acidic residues). Residues 366–379 (ECEVHKSSHQDEGT) are compositionally biased toward basic and acidic residues. The span at 406 to 442 (ETINGVSSQSQVPFRPRWQQNQYYSTTGRGHLSTEQY) shows a compositional bias: polar residues. Phosphoserine is present on Ser-495. 2 disordered regions span residues 594-656 (RGSS…PSAQ) and 671-693 (LFTH…QTLD). The segment covering 637-653 (PEPPLAMRPSRPAPLPP) has biased composition (pro residues). Residues 675–685 (ESCESPEKEGP) are compositionally biased toward basic and acidic residues. The stretch at 742–762 (LEFYESNIESLNMELQQLREM) forms a coiled coil. Residues 791–974 (KRAKVIEELL…KEINVNINEY (184 aa)) form the DH domain. Residues 1015 to 1224 (LKHLTGFAPQ…LKVAGREGNL (210 aa)) enclose the BAR domain. Positions 1292–1355 (PPEKLFQAER…YSSFLKPYNT (64 aa)) constitute an SH3 5 domain. The disordered stretch occupies residues 1357–1496 (RSHSDVSVGS…GRNGQGKDLT (140 aa)). Over residues 1361–1387 (DVSVGSHSSTESEQSSSSPRFPRQNSS) the composition is skewed to low complexity. Over residues 1388-1414 (GTLTFNPGSMAVSFTSGSCQKQPQDAT) the composition is skewed to polar residues. The span at 1433-1456 (SESSPSRCPSDPDSSPQPRSWDSP) shows a compositional bias: low complexity. The SH3 6 domain occupies 1519-1582 (EGNQVYFAVY…PSNYIRKAEY (64 aa)).

In terms of assembly, binds DNM1 via its N-terminal SH3 domains. The C-terminal SH3 domain binds a complex containing actin, tubulin, Hsp70 and actin-regulatory proteins, such as ENAH, EVL, WIRE, CR16, WAVE1 and NAP1L1. Interacts with FASLG. Interacts (via SH3 domain 6) with WASL. Interacts (via SH3 domain 6) interacts with ENAH. Interacts (via C-terminal domain) with TJP1; required for the apical cell-cell junction localization of DNMBP.

The protein resides in the cytoplasm. Its subcellular location is the golgi apparatus. It is found in the golgi stack. It localises to the cytoskeleton. The protein localises to the synapse. The protein resides in the cell junction. Functionally, plays a critical role as a guanine nucleotide exchange factor (GEF) for CDC42 in several intracellular processes associated with the actin and microtubule cytoskeleton. Regulates the structure of apical junctions in epithelial cells. Participates in the normal lumenogenesis of epithelial cell cysts by regulating spindle orientation. Plays a key role in ciliogenesis and cyst formation. May play a role in membrane trafficking between the cell surface and the Golgi. The protein is Dynamin-binding protein of Canis lupus familiaris (Dog).